A 125-amino-acid chain; its full sequence is Large ribosomal subunit protein uL30 (125 aa).

A large ribosomal subunit protein uL30 region spans residues Met-1–Asp-61. Residues Phe-62–Leu-125 form a unknown region.

The protein belongs to the universal ribosomal protein uL30 family. Part of the 50S ribosomal subunit.

The polypeptide is Large ribosomal subunit protein uL30 (Aquifex aeolicus (strain VF5)).